A 365-amino-acid polypeptide reads, in one-letter code: Peptide chain release factor 1 (365 aa).

At Q240 the chain carries N5-methylglutamine.

It belongs to the prokaryotic/mitochondrial release factor family. Post-translationally, methylated by PrmC. Methylation increases the termination efficiency of RF1.

The protein localises to the cytoplasm. Peptide chain release factor 1 directs the termination of translation in response to the peptide chain termination codons UAG and UAA. The polypeptide is Peptide chain release factor 1 (Bifidobacterium animalis subsp. lactis (strain AD011)).